Reading from the N-terminus, the 213-residue chain is Adenylate kinase (213 aa).

10–15 (GCGKGT) contributes to the ATP binding site. The tract at residues 30–59 (STGDLMRKEISLNTRLGLKCQEYMNAGKYV) is NMP. AMP is bound by residues threonine 31, arginine 36, 57-59 (KYV), 83-86 (GYPR), and glutamine 90. An LID region spans residues 124-161 (NRLVCPLCKASFNLETRKPKQEGLCDFDNTKLVKRSDD). Arginine 125 is an ATP binding site. The Zn(2+) site is built by cysteine 128 and cysteine 131. 134–135 (SF) contacts ATP. Zn(2+) is bound by residues cysteine 148 and aspartate 151. Residues arginine 158 and arginine 169 each contribute to the AMP site. Aspartate 197 provides a ligand contact to ATP.

This sequence belongs to the adenylate kinase family. In terms of assembly, monomer.

The protein resides in the cytoplasm. It carries out the reaction AMP + ATP = 2 ADP. Its pathway is purine metabolism; AMP biosynthesis via salvage pathway; AMP from ADP: step 1/1. Functionally, catalyzes the reversible transfer of the terminal phosphate group between ATP and AMP. Plays an important role in cellular energy homeostasis and in adenine nucleotide metabolism. This is Adenylate kinase from Mycoplasma mycoides subsp. mycoides SC (strain CCUG 32753 / NCTC 10114 / PG1).